The following is a 447-amino-acid chain: MDGMKYIISLFFIFVFLEGSKTEQVKHSDTYCVFQDKKYRVGEKWHPYLEPYGLVYCVNCICSENGNVLCSRVRCPSLHCLSPVHIPHLCCPRCPDSLPPVNNKVTSKSCEYNGTTYQHGELFIAEGLFQNRQPNQCSQCSCSEGNVYCGLKTCPKLTCAFPVSVPDSCCRVCRGDAELSWEHADGDIFRQPANREARHSYLRSPYDPPPNRQAGGLPRFPGSRSHRGAVIDSQQASGTIVQIVINNKHKHGQVCVSNGKTYSHGESWHPNLRAFGIVECVLCTCNVTKQECKKIHCPNRYPCKYPQKIDGKCCKVCPEEPPSQNFDSKGSFCGEETMPVYESVFMEDGETTRKVALETERPPQVEVHVWTIQKGILQHFHIEKISKRMFGELHHFKLVTRTTLNQWKLFTEGEAQLSQMCSSQVCRTELEDLVQVLYLGRPEKDHC.

Positions 1–22 (MDGMKYIISLFFIFVFLEGSKT) are cleaved as a signal peptide. VWFC domains lie at 30–95 (TYCV…PRCP) and 108–174 (KSCE…RVCR). Asn113 is a glycosylation site (N-linked (GlcNAc...) asparagine). The short motif at 174–176 (RGD) is the Cell attachment site element. The interval 200 to 224 (SYLRSPYDPPPNRQAGGLPRFPGSR) is disordered. One can recognise a VWFC 3 domain in the interval 253–318 (QVCVSNGKTY…IDGKCCKVCP (66 aa)). Residue Asn286 is glycosylated (N-linked (GlcNAc...) asparagine).

Post-translationally, may be glycosylated. In terms of tissue distribution, expressed in heart, brain, lung, liver, kidney and testis.

The protein resides in the secreted. Its function is as follows. Seems to antagonize the function of BMP4 by binding to it and preventing its interaction with receptors. Alters the fate commitment of neural stem cells from gliogenesis to neurogenesis. Contributes to neuronal differentiation of neural stem cells in the brain by preventing the adoption of a glial fate. May play a crucial role in dorsoventral axis formation. Antagonizes the function of BMP7 and may thus play an important role in the embryonic bone formation. Shows no inhibitory effect on the inducing activity of BMP2. Plays a role during anterior segment eye development. The sequence is that of Chordin-like protein 1 (Chrdl1) from Mus musculus (Mouse).